The sequence spans 177 residues: MAGSRLETVGSVFSRTRDLMRAGVLKEKPLWYDIYKAFPPLREPVFRRPRLRYGKAKADIQDIFYQEDQIRAKFFATYGSGQKAFDLFNPNFKSTCQRFVEKYTELQNLGETDEEKLFVETGKALLAEGIILRRVREARTVSVRLQASSEGHEPQEDDDLAQRGQVKQEPETAPSPP.

Ala-2 is subject to N-acetylalanine. An N6-succinyllysine modification is found at Lys-83. Lys-102 bears the N6-acetyllysine mark. The disordered stretch occupies residues 145–177 (LQASSEGHEPQEDDDLAQRGQVKQEPETAPSPP).

It belongs to the mitochondrion-specific ribosomal protein mS23 family. Component of the mitochondrial ribosome small subunit (28S) which comprises a 12S rRNA and about 30 distinct proteins.

The protein resides in the mitochondrion. This Mus musculus (Mouse) protein is Small ribosomal subunit protein mS23.